Reading from the N-terminus, the 257-residue chain is Diphthine synthase (257 aa).

Residues L9, D85, V88, 113–114, L164, A207, and H232 contribute to the S-adenosyl-L-methionine site; that span reads SI.

Belongs to the diphthine synthase family. Homodimer.

The enzyme catalyses 2-[(3S)-amino-3-carboxypropyl]-L-histidyl-[translation elongation factor 2] + 3 S-adenosyl-L-methionine = diphthine-[translation elongation factor 2] + 3 S-adenosyl-L-homocysteine + 3 H(+). The protein operates within protein modification; peptidyl-diphthamide biosynthesis. Functionally, S-adenosyl-L-methionine-dependent methyltransferase that catalyzes the trimethylation of the amino group of the modified target histidine residue in translation elongation factor 2 (EF-2), to form an intermediate called diphthine. The three successive methylation reactions represent the second step of diphthamide biosynthesis. The sequence is that of Diphthine synthase from Methanococcus aeolicus (strain ATCC BAA-1280 / DSM 17508 / OCM 812 / Nankai-3).